We begin with the raw amino-acid sequence, 458 residues long: Probable threonine--tRNA ligase, cytoplasmic (458 aa).

Residues 41 to 104 (DPIKITLLPD…EGDCSLEIFG (64 aa)) form the TGS domain.

The protein belongs to the class-II aminoacyl-tRNA synthetase family.

Its subcellular location is the cytoplasm. The enzyme catalyses tRNA(Thr) + L-threonine + ATP = L-threonyl-tRNA(Thr) + AMP + diphosphate + H(+). The sequence is that of Probable threonine--tRNA ligase, cytoplasmic from Arabidopsis thaliana (Mouse-ear cress).